A 314-amino-acid polypeptide reads, in one-letter code: uncharacterized protein (314 aa).

A signal peptide spans 1-18 (MKVSLLIFLIILVGVIKS). N-linked (GlcNAc...) asparagine glycans are attached at residues N43, N96, N109, N116, N117, and N161. The disordered stretch occupies residues 252–314 (SMRITKNNPH…PKSIDFHHLF (63 aa)). Composition is skewed to low complexity over residues 257-268 (KNNPHLNNNNNN) and 285-296 (KTTTKTSTKTTS).

The protein resides in the secreted. This is an uncharacterized protein from Dictyostelium discoideum (Social amoeba).